We begin with the raw amino-acid sequence, 448 residues long: tRNA(Ile)-lysidine synthase (448 aa).

25 to 30 (SGGSDS) contributes to the ATP binding site.

It belongs to the tRNA(Ile)-lysidine synthase family.

It localises to the cytoplasm. The catalysed reaction is cytidine(34) in tRNA(Ile2) + L-lysine + ATP = lysidine(34) in tRNA(Ile2) + AMP + diphosphate + H(+). In terms of biological role, ligates lysine onto the cytidine present at position 34 of the AUA codon-specific tRNA(Ile) that contains the anticodon CAU, in an ATP-dependent manner. Cytidine is converted to lysidine, thus changing the amino acid specificity of the tRNA from methionine to isoleucine. This is tRNA(Ile)-lysidine synthase from Brucella melitensis biotype 2 (strain ATCC 23457).